A 290-amino-acid chain; its full sequence is ATP synthase gamma chain (290 aa).

This sequence belongs to the ATPase gamma chain family. In terms of assembly, F-type ATPases have 2 components, CF(1) - the catalytic core - and CF(0) - the membrane proton channel. CF(1) has five subunits: alpha(3), beta(3), gamma(1), delta(1), epsilon(1). CF(0) has three main subunits: a, b and c.

It localises to the cell inner membrane. Functionally, produces ATP from ADP in the presence of a proton gradient across the membrane. The gamma chain is believed to be important in regulating ATPase activity and the flow of protons through the CF(0) complex. The chain is ATP synthase gamma chain from Anaeromyxobacter sp. (strain K).